Here is a 340-residue protein sequence, read N- to C-terminus: GTP 3',8-cyclase (340 aa).

The 220-residue stretch at 8 to 227 (KLGRPIRDLR…TMIEQHFEID (220 aa)) folds into the Radical SAM core domain. Residue Arg-17 coordinates GTP. [4Fe-4S] cluster is bound by residues Cys-24 and Cys-28. Tyr-30 is an S-adenosyl-L-methionine binding site. Residue Cys-31 coordinates [4Fe-4S] cluster. Residue Arg-71 participates in GTP binding. S-adenosyl-L-methionine is bound at residue Gly-75. Thr-102 provides a ligand contact to GTP. Residue Ser-126 coordinates S-adenosyl-L-methionine. GTP is bound at residue Lys-163. Met-197 contributes to the S-adenosyl-L-methionine binding site. Cys-261 and Cys-264 together coordinate [4Fe-4S] cluster. 266-268 (RAR) contacts GTP. [4Fe-4S] cluster is bound at residue Cys-278.

This sequence belongs to the radical SAM superfamily. MoaA family. As to quaternary structure, monomer and homodimer. [4Fe-4S] cluster is required as a cofactor.

It catalyses the reaction GTP + AH2 + S-adenosyl-L-methionine = (8S)-3',8-cyclo-7,8-dihydroguanosine 5'-triphosphate + 5'-deoxyadenosine + L-methionine + A + H(+). It functions in the pathway cofactor biosynthesis; molybdopterin biosynthesis. Its function is as follows. Catalyzes the cyclization of GTP to (8S)-3',8-cyclo-7,8-dihydroguanosine 5'-triphosphate. This is GTP 3',8-cyclase from Staphylococcus aureus (strain MRSA252).